The sequence spans 344 residues: Follistatin (344 aa).

The signal sequence occupies residues M1–A29. A TB domain is found at G30–G103. Intrachain disulfides connect C32/C55, C42/C88, C56/C91, C95/C106, C100/C116, C118/C150, C122/C143, and C132/C164. Residues T94–V117 form the Follistatin-like 1 domain. Kazal-like domains lie at N112–K166, N186–K241, and K261–S318. N-linked (GlcNAc...) asparagine glycosylation is present at N124. A Follistatin-like 2 domain is found at T167–V190. Disulfide bonds link C192/C225, C196/C218, and C207/C239. Residues S244–S268 form the Follistatin-like 3 domain. Cystine bridges form between C270–C302, C274–C295, and C284–C316. N288 is a glycosylation site (N-linked (GlcNAc...) asparagine). The disordered stretch occupies residues C316 to W344. Residues E321 to D333 show a composition bias toward acidic residues.

As to quaternary structure, interacts with GDF11. Interacts with activin A/INHBA. Interacts with myostatin/MSTN.

Its subcellular location is the secreted. It localises to the nucleus. The protein resides in the nucleolus. Functionally, multifunctional regulatory protein whose primary function is to antagonize members of the transforming growth factor beta (TGF-beta) superfamily including activin, myostatin, GDF11 or bone morphogenetic proteins (BMPs). Mechanistically, binds to these ligands in the extracellular space, blocking their type II receptor-binding site to inhibit downstream signaling. Plays an essential role in muscle fiber formation and growth both by preventing the repressive effects of myostatin and through SMAD3/AKT/mTOR signaling independently of myostatin. Also promotes neural differentiation by antagonizing the action BMP4. Acts as a specific inhibitor of the biosynthesis and secretion of pituitary follicle stimulating hormone (FSH) by sequestering activin A/INHBA. On the other hand, translocates into the nucleus where it down-regulates rRNA synthesis and ribosome biogenesis to maintain cellular energy homeostasis by binding to rDNA. The sequence is that of Follistatin from Bos taurus (Bovine).